A 1969-amino-acid chain; its full sequence is Cytadherence high molecular weight protein 1 (1969 aa).

The stretch at 148-166 is one HAT 1 repeat; it reads YYDENEEWVWTGYFDEDNK. A disordered region spans residues 174 to 244; it reads KPAEVEALEE…QPESEQEGSG (71 aa). Acidic residues-rich tracts occupy residues 179–207 and 214–242; these read EALE…EVVE and QPEE…EQEG. HAT repeat units lie at residues 258-278, 300-331, and 333-353; these read YYDE…NNFV and AQQE…VEGY. The disordered stretch occupies residues 294–319; sequence QVEEYSAQQEQVQEEYEQQPEQEGSG. Positions 365–393 are disordered; that stretch reads VSEEQYSESVSEEQEPASEEQVAEEPAQV. The span at 374–387 shows a compositional bias: acidic residues; sequence VSEEQEPASEEQVA. 2 HAT repeats span residues 477 to 497 and 959 to 997; these read YYDE…GMFI and LTLV…DQNN. The stretch at 1000 to 1027 forms a coiled coil; that stretch reads SDKDSKTQKVDQLIEEFNKQEAIKKTEE. An HAT 7 repeat occupies 1029-1067; sequence EAKKASEPFYNKYIGNKQFGYYNDKNVWIWNGYFDENDQ. Coiled coils occupy residues 1082–1190, 1547–1621, and 1758–1790; these read IEDE…FDNF, SVNQ…LALT, and NRGD…NKKV.

Its subcellular location is the cell projection. It localises to the attachment organelle membrane. Component of the cytoskeleton-like structure which stabilizes the shape of the wall-less Mycoplasma. This cytoskeleton-like network of accessory proteins containing HMW proteins 1 to 5 allows the proper anchoring of cytadhesin proteins in the mycoplasmal membrane at the attachment organelle. The chain is Cytadherence high molecular weight protein 1 (hlp1) from Mycoplasmoides gallisepticum (strain R(low / passage 15 / clone 2)) (Mycoplasma gallisepticum).